Consider the following 367-residue polypeptide: Phosphoribosylaminoimidazole-succinocarboxamide synthase (367 aa).

Belongs to the SAICAR synthetase family.

The enzyme catalyses 5-amino-1-(5-phospho-D-ribosyl)imidazole-4-carboxylate + L-aspartate + ATP = (2S)-2-[5-amino-1-(5-phospho-beta-D-ribosyl)imidazole-4-carboxamido]succinate + ADP + phosphate + 2 H(+). It functions in the pathway purine metabolism; IMP biosynthesis via de novo pathway; 5-amino-1-(5-phospho-D-ribosyl)imidazole-4-carboxamide from 5-amino-1-(5-phospho-D-ribosyl)imidazole-4-carboxylate: step 1/2. The chain is Phosphoribosylaminoimidazole-succinocarboxamide synthase from Shewanella pealeana (strain ATCC 700345 / ANG-SQ1).